The chain runs to 485 residues: NADH-quinone oxidoreductase subunit N (485 aa).

Transmembrane regions (helical) follow at residues 8 to 28 (LIAL…MLCI), 35 to 55 (FVNA…LYFV), 75 to 95 (FYTG…YPWL), 105 to 125 (FYLL…ANHL), 127 to 147 (SLFI…GYAF), 159 to 179 (YMLL…LIYA), 203 to 223 (LLAG…LVPF), 235 to 255 (PAPV…GAVM), 271 to 291 (IVLG…AVSQ), 297 to 317 (LLGY…IAVQ), 326 to 346 (VGVY…VVSL), 374 to 394 (AVMT…GFFG), 407 to 426 (LWWL…YYYL), and 449 to 469 (ALTA…FFGL).

It belongs to the complex I subunit 2 family. As to quaternary structure, NDH-1 is composed of 13 different subunits. Subunits NuoA, H, J, K, L, M, N constitute the membrane sector of the complex.

It localises to the cell inner membrane. The catalysed reaction is a quinone + NADH + 5 H(+)(in) = a quinol + NAD(+) + 4 H(+)(out). Its function is as follows. NDH-1 shuttles electrons from NADH, via FMN and iron-sulfur (Fe-S) centers, to quinones in the respiratory chain. The immediate electron acceptor for the enzyme in this species is believed to be ubiquinone. Couples the redox reaction to proton translocation (for every two electrons transferred, four hydrogen ions are translocated across the cytoplasmic membrane), and thus conserves the redox energy in a proton gradient. This Pectobacterium carotovorum subsp. carotovorum (strain PC1) protein is NADH-quinone oxidoreductase subunit N.